Here is a 428-residue protein sequence, read N- to C-terminus: Beta-1,3-galactosyl-O-glycosyl-glycoprotein beta-1,6-N-acetylglucosaminyltransferase (428 aa).

Over 1 to 9 (MLRNLFRRR) the chain is Cytoplasmic. The tract at residues 5-9 (LFRRR) is mediates interaction with GOLPH3 and is necessary and sufficient for localization to the Golgi. A helical; Signal-anchor for type II membrane protein transmembrane segment spans residues 10-32 (LFSCPTKYYFMLLVLSLITFSVL). Positions 33 to 121 (RIHQKPEFFS…EPLTKEEVGF (89 aa)) are stem region. Topologically, residues 33–428 (RIHQKPEFFS…RHKALENLEH (396 aa)) are lumenal. Residues Asn58 and Asn95 are each glycosylated (N-linked (GlcNAc...) asparagine). Cystine bridges form between Cys59-Cys413, Cys100-Cys172, Cys151-Cys199, and Cys372-Cys381. A catalytic region spans residues 122–428 (PIAYSIVVHH…RHKALENLEH (307 aa)). Residues 128-130 (VVH), 155-157 (DRK), and Tyr187 contribute to the UDP-N-acetyl-alpha-D-glucosamine site. Positions 243, 250, 251, 254, 320, 341, and 358 each coordinate a glycoprotein. The active-site Nucleophile is Glu320. Residues Arg378 and Lys401 each contribute to the UDP-N-acetyl-alpha-D-glucosamine site.

The protein belongs to the glycosyltransferase 14 family. In terms of assembly, interacts with GOLPH3; may control GCNT1 retention in the Golgi. N-glycosylated. Expressed in kidney, liver, stomach, spleen, lung and brain.

It is found in the golgi apparatus membrane. The enzyme catalyses a 3-O-[beta-D-galactosyl-(1-&gt;3)-N-acetyl-alpha-D-galactosaminyl]-L-seryl-[protein] + UDP-N-acetyl-alpha-D-glucosamine = 3-O-{beta-D-galactosyl-(1-&gt;3)-[N-acetyl-beta-D-glucosaminyl-(1-&gt;6)]-N-acetyl-alpha-D-galactosaminyl}-L-seryl-[protein] + UDP + H(+). The catalysed reaction is a 3-O-[beta-D-galactosyl-(1-&gt;3)-N-acetyl-alpha-D-galactosaminyl]-L-threonyl-[protein] + UDP-N-acetyl-alpha-D-glucosamine = a 3-O-{beta-D-galactosyl-(1-&gt;3)-[N-acetyl-beta-D-glucosaminyl-(1-&gt;6)]-N-acetyl-alpha-D-galactosaminyl}-L-threonyl-[protein] + UDP + H(+). It carries out the reaction a globoside GalGb4Cer + UDP-N-acetyl-alpha-D-glucosamine = a globoside GlcNAc-(beta1-&gt;6)-GalGb4Cer + UDP + H(+). It catalyses the reaction a ganglioside GA1 + UDP-N-acetyl-alpha-D-glucosamine = a ganglioside beta-D-GlcNAc-(1-&gt;6)-GA1 + UDP + H(+). It participates in protein modification; protein glycosylation. The protein operates within glycolipid biosynthesis. Inactivated by thiol-reactive agents. Inhibited by free UDP. Its function is as follows. Glycosyltransferase that catalyzes the transfer of an N-acetylglucosamine (GlcNAc) moiety in beta1-6 linkage from UDP-GlcNAc onto mucin-type core 1 O-glycan to form the branched mucin-type core 2 O-glycan. The catalysis is metal ion-independent and occurs with inversion of the anomeric configuration of sugar donor. Selectively involved in synthesis of mucin-type core 2 O-glycans that serve as scaffolds for the display of selectin ligand sialyl Lewis X epitope by myeloid cells, with an impact on homeostasis and recruitment to inflammatory sites. Can also act on glycolipid substrates. Transfers GlcNAc moiety to GalGb4Cer globosides in a reaction step to the synthesis of stage-specific embryonic antigen 1 (SSEA-1) determinant. Can use Galbeta1-3GalNAcalpha1-R and Galbeta1-3GalNAcbeta1-R oligosaccharide derivatives as acceptor substrates. The chain is Beta-1,3-galactosyl-O-glycosyl-glycoprotein beta-1,6-N-acetylglucosaminyltransferase (Gcnt1) from Mus musculus (Mouse).